We begin with the raw amino-acid sequence, 135 residues long: Regulator of ribonuclease activity B (135 aa).

A disordered region spans residues 114 to 135 (WGTYFESDEDDEEDESEDKPEA). The span at 119–135 (ESDEDDEEDESEDKPEA) shows a compositional bias: acidic residues.

Belongs to the RraB family. In terms of assembly, interacts with the C-terminal region of Rne.

The protein resides in the cytoplasm. In terms of biological role, globally modulates RNA abundance by binding to RNase E (Rne) and regulating its endonucleolytic activity. Can modulate Rne action in a substrate-dependent manner by altering the composition of the degradosome. This Photobacterium profundum (strain SS9) protein is Regulator of ribonuclease activity B.